Reading from the N-terminus, the 92-residue chain is Long neurotoxin 3FTx-Oxy2 (92 aa).

Positions 1–21 are cleaved as a signal peptide; the sequence is MKTLLLTLVVVTIVCLDLGYT. Disulfide bonds link Cys24–Cys42, Cys35–Cys63, Cys67–Cys79, and Cys80–Cys85.

The protein belongs to the three-finger toxin family. Long-chain subfamily. Type II alpha-neurotoxin sub-subfamily. In terms of tissue distribution, expressed by the venom gland.

The protein resides in the secreted. Its function is as follows. Binds with high affinity to muscular (alpha-1/CHRNA1) and neuronal (alpha-7/CHRNA7) nicotinic acetylcholine receptor (nAChR) and inhibits acetylcholine from binding to the receptor, thereby impairing neuromuscular and neuronal transmission. The chain is Long neurotoxin 3FTx-Oxy2 from Oxyuranus microlepidotus (Inland taipan).